Consider the following 591-residue polypeptide: Cineole synthase 1, chloroplastic (591 aa).

The transit peptide at 1-44 (MSSLIMQVVIPKPAKFFHNNLFSLSSKRHRFSTTTTTRGGRWAR) directs the protein to the chloroplast. Arginine 308, aspartate 345, aspartate 349, arginine 486, and aspartate 489 together coordinate (2E)-geranyl diphosphate. 2 residues coordinate Mg(2+): aspartate 345 and aspartate 349. The short motif at 345 to 349 (DDVFD) is the DDXXD motif element. Residues aspartate 489, threonine 493, and glutamate 497 each coordinate Mg(2+).

This sequence belongs to the terpene synthase family. Tpsb subfamily. In terms of assembly, monomer. Mg(2+) serves as cofactor. Requires Mn(2+) as cofactor.

The protein resides in the plastid. The protein localises to the chloroplast. The catalysed reaction is (2E)-geranyl diphosphate + H2O = 1,8-cineole + diphosphate. The enzyme catalyses (2E)-geranyl diphosphate = alpha-pinene + diphosphate. It catalyses the reaction (2E)-geranyl diphosphate = beta-pinene + diphosphate. It carries out the reaction (2E)-geranyl diphosphate + H2O = (S)-alpha-terpineol + diphosphate. The catalysed reaction is (2E)-geranyl diphosphate = beta-myrcene + diphosphate. The enzyme catalyses (2E)-geranyl diphosphate = sabinene + diphosphate. It functions in the pathway secondary metabolite biosynthesis; terpenoid biosynthesis. Functionally, monoterpene synthase (TPS) involved in the biosynthesis of monoterpene natural products, components of the chemical defense arsenal. Catalyzes the conversion of (2E)-geranyl diphosphate (GPP) into 1,8-cineole, and, as minor products, alpha-terpineol, beta-pinene, alpha-pinene, sabinene and myrcene. This is Cineole synthase 1, chloroplastic from Salvia fruticosa (Greek sage).